A 242-amino-acid polypeptide reads, in one-letter code: Small ribosomal subunit protein uS2 (242 aa).

It belongs to the universal ribosomal protein uS2 family.

This is Small ribosomal subunit protein uS2 from Neisseria meningitidis serogroup B (strain ATCC BAA-335 / MC58).